Here is a 420-residue protein sequence, read N- to C-terminus: Bone morphogenetic protein 2 (420 aa).

An N-terminal signal peptide occupies residues 1–23 (MVAVVRSLMVLLLAQVLLEGATG). Residues 24–303 (LIPEVGRRRY…DSVLHTREKR (280 aa)) constitute a propeptide that is removed on maturation. N-linked (GlcNAc...) asparagine glycans are attached at residues Asn138, Asn167, Asn168, Asn172, and Asn362. 3 disulfide bridges follow: Cys320–Cys385, Cys349–Cys417, and Cys353–Cys419.

It belongs to the TGF-beta family. As to quaternary structure, homodimer; disulfide-linked.

Its subcellular location is the secreted. Induces cartilage and bone formation. This Tetraodon nigroviridis (Spotted green pufferfish) protein is Bone morphogenetic protein 2 (bmp2).